We begin with the raw amino-acid sequence, 456 residues long: Shootin-1 (456 aa).

An N-acetylmethionine modification is found at methionine 1. A phosphoserine mark is found at serine 3 and serine 4. The stretch at 7-353 forms a coiled coil; sequence EKQLQLITSL…RVNQSENSVP (347 aa). Serine 101 and serine 249 each carry phosphoserine; by PAK1. Disordered stretches follow at residues 343–405 and 418–445; these read KRVN…VTDL and KKGV…CESA. Residues 352 to 369 show a composition bias toward pro residues; sequence VPPPPPPPPPLPPPPPNP. Position 375 is a phosphoserine (serine 375).

The protein belongs to the shootin family. In terms of assembly, interacts with L1CAM; this interaction occurs in axonal growth cones. Interacts with actin filament retrograde flow; this interaction is enhanced in a netrin-1- and PAK1-dependent manner and promotes F-actin-substrate coupling and concomitant formation of traction forces at axonal growth cones. Interacts with RUFY3. Interacts with PFN2. Interacts (via N-terminus) with KIF20B; this interaction is direct and promotes the association of SHTN1 to microtubules in primary neurons. Associates with microtubule. In terms of processing, phosphorylated on Ser-101 and Ser-249 by PAK1 through a CDC42- and RAC1-dependent signaling pathway, which enhances its association with F-actin retrograde flow in filopodia and lamellipodia of axonal growth cones. Phosphorylation on Ser-101 and Ser-249 is increased by netrin-1.

It localises to the perikaryon. It is found in the cell projection. Its subcellular location is the axon. The protein resides in the growth cone. The protein localises to the cytoplasm. It localises to the cytoskeleton. It is found in the filopodium. Its subcellular location is the lamellipodium. Its function is as follows. Involved in the generation of internal asymmetric signals required for neuronal polarization and neurite outgrowth. Mediates netrin-1-induced F-actin-substrate coupling or 'clutch engagement' within the axon growth cone through activation of CDC42, RAC1 and PAK1-dependent signaling pathway, thereby converting the F-actin retrograde flow into traction forces, concomitantly with filopodium extension and axon outgrowth. Plays a role in cytoskeletal organization by regulating the subcellular localization of phosphoinositide 3-kinase (PI3K) activity at the axonal growth cone. Also plays a role in regenerative neurite outgrowth. In the developing cortex, cooperates with KIF20B to promote both the transition from the multipolar to the bipolar stage and the radial migration of cortical neurons from the ventricular zone toward the superficial layer of the neocortex. Involved in the accumulation of phosphatidylinositol 3,4,5-trisphosphate (PIP3) in the growth cone of primary hippocampal neurons. The polypeptide is Shootin-1 (Pongo abelii (Sumatran orangutan)).